Reading from the N-terminus, the 457-residue chain is 5' exonuclease Apollo (457 aa).

The TBM motif lies at 425-437; it reads ELPKQYLLTPLNA.

The protein belongs to the DNA repair metallo-beta-lactamase (DRMBL) family. In terms of assembly, interacts with TERF2; the interaction is direct.

It is found in the chromosome. Its subcellular location is the telomere. The protein localises to the nucleus. It catalyses the reaction a beta-lactam + H2O = a substituted beta-amino acid. In terms of biological role, 5'-3' exonuclease that plays a central role in telomere maintenance and protection during S-phase. Participates in the protection of telomeres against non-homologous end-joining (NHEJ)-mediated repair, thereby ensuring that telomeres do not fuse. Plays a key role in telomeric loop (T loop) formation by being recruited by TERF2 at the leading end telomeres and by processing leading-end telomeres immediately after their replication via its exonuclease activity: generates 3' single-stranded overhang at the leading end telomeres avoiding blunt leading-end telomeres that are vulnerable to end-joining reactions and expose the telomere end in a manner that activates the DNA repair pathways. May be required for DNA interstrand cross-link repair. Possesses beta-lactamase activity, catalyzing the hydrolysis of penicillin G and nitrocefin. Exhibits no activity towards other beta-lactam antibiotic classes including cephalosporins (cefotaxime) and carbapenems (imipenem). The protein is 5' exonuclease Apollo (DCLRE1B) of Gallus gallus (Chicken).